The sequence spans 236 residues: Urease accessory protein UreF (236 aa).

It belongs to the UreF family. As to quaternary structure, ureD, UreF and UreG form a complex that acts as a GTP-hydrolysis-dependent molecular chaperone, activating the urease apoprotein by helping to assemble the nickel containing metallocenter of UreC. The UreE protein probably delivers the nickel.

It is found in the cytoplasm. Required for maturation of urease via the functional incorporation of the urease nickel metallocenter. The protein is Urease accessory protein UreF of Granulibacter bethesdensis (strain ATCC BAA-1260 / CGDNIH1).